The chain runs to 630 residues: Plastin-1 (630 aa).

Residues 1 to 114 (MENNVTTISR…LGGTSSISTE (114 aa)) are fimbrin headpiece. 2 consecutive EF-hand domains span residues 11–46 (EELE…ASLP) and 51–86 (KVRE…LKSK). Ca(2+) contacts are provided by Asp24, Asp26, Ser28, Tyr30, Glu35, Asp64, Asn66, Asp68, Lys70, and Glu75. Actin-binding stretches follow at residues 108–375 (TSSI…LFNT) and 376–624 (YPAL…LMGR). The interval 115–630 (GTQHSYSEEE…LMGRGLNKIK (516 aa)) is fimbrin core. Calponin-homology (CH) domains lie at 122–238 (EEEK…KVGL), 266–377 (LSPE…NTYP), 396–505 (SNEE…RRYT), and 517–626 (KVND…GRGL).

As to quaternary structure, monomer. In terms of processing, the N-terminus is blocked.

The protein resides in the cytoplasm. Its subcellular location is the cell projection. It localises to the stereocilium. In terms of biological role, actin-bundling protein. In the inner ear, it is required for stereocilia formation. Mediates liquid packing of actin filaments that is necessary for stereocilia to grow to their proper dimensions. In Gallus gallus (Chicken), this protein is Plastin-1 (PLS1).